The primary structure comprises 169 residues: MYTSGYAHRSSSFSSAASKIARVSTENTTAGLISEVVYREDQPMMTQLLLLPLLQQLGQQSRWQLWLTPQQKLSREWVQASGLPLTKVMQISQLSPCHTVESMVRALRTGNYSVVIGWLADDLTEEEHAELVDAANEGNAMGFIMRPVSASSHTTRQLSGLKIHSNLYH.

The interval 106 to 112 is ftsZ binding; it reads ALRTGNY. Residues 162-169 form a lon protease binding region; that stretch reads KIHSNLYH.

Belongs to the SulA family. In terms of assembly, interacts with FtsZ. Is rapidly cleaved and degraded by the Lon protease once DNA damage is repaired.

Functionally, component of the SOS system and an inhibitor of cell division. Accumulation of SulA causes rapid cessation of cell division and the appearance of long, non-septate filaments. In the presence of GTP, binds a polymerization-competent form of FtsZ in a 1:1 ratio, thus inhibiting FtsZ polymerization and therefore preventing it from participating in the assembly of the Z ring. This mechanism prevents the premature segregation of damaged DNA to daughter cells during cell division. The chain is Cell division inhibitor SulA from Shigella boydii serotype 4 (strain Sb227).